Consider the following 145-residue polypeptide: Transmembrane protein CCDC163 (145 aa).

A helical membrane pass occupies residues 38–54 (LIGLCICFFCSSGCIFL).

Its subcellular location is the membrane. The sequence is that of Transmembrane protein CCDC163 from Homo sapiens (Human).